We begin with the raw amino-acid sequence, 149 residues long: Large ribosomal subunit protein bL9 (149 aa).

Belongs to the bacterial ribosomal protein bL9 family.

Functionally, binds to the 23S rRNA. This Edwardsiella ictaluri (strain 93-146) protein is Large ribosomal subunit protein bL9.